The sequence spans 183 residues: Ribosome rescue factor SmrB (183 aa).

Residues 98 to 173 enclose the Smr domain; sequence LDLHGLTQLQ…GDAALLVLIE (76 aa).

Belongs to the SmrB family. In terms of assembly, associates with collided ribosomes, but not with correctly translating polysomes.

Functionally, acts as a ribosome collision sensor. Detects stalled/collided disomes (pairs of ribosomes where the leading ribosome is stalled and a second ribosome has collided with it) and endonucleolytically cleaves mRNA at the 5' boundary of the stalled ribosome. Stalled/collided disomes form a new interface (primarily via the 30S subunits) that binds SmrB. Cleaved mRNA becomes available for tmRNA ligation, leading to ribosomal subunit dissociation and rescue of stalled ribosomes. In Salmonella agona (strain SL483), this protein is Ribosome rescue factor SmrB.